A 313-amino-acid chain; its full sequence is Homoserine O-succinyltransferase (313 aa).

The active-site Acyl-thioester intermediate is C142. 2 residues coordinate substrate: K163 and S192. H235 acts as the Proton acceptor in catalysis. Residue E237 is part of the active site. R249 provides a ligand contact to substrate.

The protein belongs to the MetA family.

Its subcellular location is the cytoplasm. It carries out the reaction L-homoserine + succinyl-CoA = O-succinyl-L-homoserine + CoA. It functions in the pathway amino-acid biosynthesis; L-methionine biosynthesis via de novo pathway; O-succinyl-L-homoserine from L-homoserine: step 1/1. Functionally, transfers a succinyl group from succinyl-CoA to L-homoserine, forming succinyl-L-homoserine. In Vibrio atlanticus (strain LGP32) (Vibrio splendidus (strain Mel32)), this protein is Homoserine O-succinyltransferase.